We begin with the raw amino-acid sequence, 513 residues long: CUGBP Elav-like family member 2 (513 aa).

RRM domains follow at residues 35–118 (IKMF…PADS), 127–207 (RKLF…FADT), and 428–506 (ANLF…LKRS).

Belongs to the CELF/BRUNOL family.

Its subcellular location is the nucleus. It localises to the cytoplasm. Functionally, RNA-binding protein implicated in the regulation of several post-transcriptional events. May be involved in pre-mRNA alternative splicing, mRNA translation repression and stability. This chain is CUGBP Elav-like family member 2 (celf2), found in Xenopus tropicalis (Western clawed frog).